The following is a 267-amino-acid chain: PF03932 family protein CutC (267 aa).

Belongs to the CutC family.

It is found in the cytoplasm. The protein is PF03932 family protein CutC of Xylella fastidiosa (strain 9a5c).